The chain runs to 159 residues: MRCPFCRHDDTQVVDSRVSEDGAAIRRRRRCSACDKRFTTYERVELALPAVVKKDGSRTEFDRRKIVASMQLALRKRPVAADAIDAAVARIEYQLLASGEREVRSEKLGELVMNELRQLDTIAYVRFASVYRRFEDVSEFEDVIEEFRRAAPAKTPRKR.

Residues 3–34 (CPFCRHDDTQVVDSRVSEDGAAIRRRRRCSAC) fold into a zinc finger. The ATP-cone domain maps to 49–139 (PAVVKKDGSR…VYRRFEDVSE (91 aa)).

The protein belongs to the NrdR family. Zn(2+) serves as cofactor.

In terms of biological role, negatively regulates transcription of bacterial ribonucleotide reductase nrd genes and operons by binding to NrdR-boxes. The protein is Transcriptional repressor NrdR of Burkholderia pseudomallei (strain 1106a).